Reading from the N-terminus, the 127-residue chain is Mediator of RNA polymerase II transcription subunit 9 (127 aa).

A coiled-coil region spans residues 95-119; it reads QKEQEIEAKKRVHRQLRQRVEEIAG.

Belongs to the Mediator complex subunit 9 family. In terms of assembly, component of the Mediator complex.

It is found in the nucleus. Component of the Mediator complex, a coactivator involved in the regulated transcription of nearly all RNA polymerase II-dependent genes. Mediator functions as a bridge to convey information from gene-specific regulatory proteins to the basal RNA polymerase II transcription machinery. Mediator is recruited to promoters by direct interactions with regulatory proteins and serves as a scaffold for the assembly of a functional preinitiation complex with RNA polymerase II and the general transcription factors. The sequence is that of Mediator of RNA polymerase II transcription subunit 9 (CSE2) from Eremothecium gossypii (strain ATCC 10895 / CBS 109.51 / FGSC 9923 / NRRL Y-1056) (Yeast).